A 527-amino-acid polypeptide reads, in one-letter code: Acyl-coenzyme A thioesterase 4, mitochondrial (527 aa).

A mitochondrion-targeting transit peptide spans 1-75 (MMTPIGIRIR…FLFDPPPIRF (75 aa)). HotDog ACOT-type domains follow at residues 172-294 (ILYN…RDSK) and 370-487 (KDTC…GPEA).

Belongs to the acyl coenzyme A hydrolase family. Mostly expressed at low levels in glandular trichomes (lupulin glands), and, to a lower extent, in stems, leaves, flowers and cones.

It localises to the mitochondrion. The enzyme catalyses 2-methylpropanoyl-CoA + H2O = 2-methylpropanoate + CoA + H(+). The catalysed reaction is propanoyl-CoA + H2O = propanoate + CoA + H(+). It carries out the reaction octanoyl-CoA + H2O = octanoate + CoA + H(+). It catalyses the reaction butanoyl-CoA + H2O = butanoate + CoA + H(+). The enzyme catalyses 3-methylbutanoyl-CoA + H2O = 3-methylbutanoate + CoA + H(+). The catalysed reaction is 2-methylbutanoyl-CoA + H2O = 2-methylbutanoate + CoA + H(+). Functionally, acyl-CoA thioesterases are a group of enzymes that catalyze the hydrolysis of acyl-CoAs to the free fatty acid and coenzyme A (CoASH), providing the potential to regulate intracellular levels of acyl-CoAs, free fatty acids and CoASH. Active on acyl CoAs with short chains (propanoyl-CoA and butanoyl-CoA), branched short chains (2-methylpropanoyl-CoA, 2-methylbutanoyl-CoA and 3-methylbutanoyl-CoA) and medium chains (octanoyl-CoA). The sequence is that of Acyl-coenzyme A thioesterase 4, mitochondrial from Humulus lupulus (European hop).